Reading from the N-terminus, the 188-residue chain is Ribosome-recycling factor (188 aa).

The protein belongs to the RRF family.

It is found in the cytoplasm. Functionally, responsible for the release of ribosomes from messenger RNA at the termination of protein biosynthesis. May increase the efficiency of translation by recycling ribosomes from one round of translation to another. The sequence is that of Ribosome-recycling factor from Cereibacter sphaeroides (strain ATCC 17029 / ATH 2.4.9) (Rhodobacter sphaeroides).